The following is a 419-amino-acid chain: Serine hydroxymethyltransferase (419 aa).

(6S)-5,6,7,8-tetrahydrofolate-binding positions include Leu121 and 125–127; that span reads GHL. Position 231 is an N6-(pyridoxal phosphate)lysine (Lys231).

It belongs to the SHMT family. As to quaternary structure, homodimer. Pyridoxal 5'-phosphate is required as a cofactor.

It localises to the cytoplasm. It carries out the reaction (6R)-5,10-methylene-5,6,7,8-tetrahydrofolate + glycine + H2O = (6S)-5,6,7,8-tetrahydrofolate + L-serine. The protein operates within one-carbon metabolism; tetrahydrofolate interconversion. It participates in amino-acid biosynthesis; glycine biosynthesis; glycine from L-serine: step 1/1. Functionally, catalyzes the reversible interconversion of serine and glycine with tetrahydrofolate (THF) serving as the one-carbon carrier. This reaction serves as the major source of one-carbon groups required for the biosynthesis of purines, thymidylate, methionine, and other important biomolecules. Also exhibits THF-independent aldolase activity toward beta-hydroxyamino acids, producing glycine and aldehydes, via a retro-aldol mechanism. The chain is Serine hydroxymethyltransferase from Phytoplasma mali (strain AT).